Here is a 130-residue protein sequence, read N- to C-terminus: ATP synthase epsilon chain (130 aa).

The protein belongs to the ATPase epsilon chain family. As to quaternary structure, F-type ATPases have 2 components, CF(1) - the catalytic core - and CF(0) - the membrane proton channel. CF(1) has five subunits: alpha(3), beta(3), gamma(1), delta(1), epsilon(1). CF(0) has three main subunits: a, b and c.

The protein localises to the cell membrane. Produces ATP from ADP in the presence of a proton gradient across the membrane. This is ATP synthase epsilon chain from Nocardia farcinica (strain IFM 10152).